A 489-amino-acid polypeptide reads, in one-letter code: GTPase Der (489 aa).

EngA-type G domains follow at residues 3–166 and 195–368; these read PVIA…PKDE and IKIA…KSAV. GTP contacts are provided by residues 9–16, 56–60, 118–121, 201–208, 248–252, and 313–316; these read GRPNVGKS, DTGGI, NKID, DTAGV, and NKWD. The region spanning 369-453 is the KH-like domain; sequence TRWPTSRLTQ…PIRIEFKGGE (85 aa). The segment at 451 to 489 is disordered; it reads GGENPYEGNKNTLTDRQVNKKRRMMSHHKKADKKRRDKR. Basic residues predominate over residues 469 to 489; it reads NKKRRMMSHHKKADKKRRDKR.

Belongs to the TRAFAC class TrmE-Era-EngA-EngB-Septin-like GTPase superfamily. EngA (Der) GTPase family. As to quaternary structure, associates with the 50S ribosomal subunit.

In terms of biological role, GTPase that plays an essential role in the late steps of ribosome biogenesis. The polypeptide is GTPase Der (Pseudomonas syringae pv. tomato (strain ATCC BAA-871 / DC3000)).